The sequence spans 184 residues: Ribosome-recycling factor (184 aa).

It belongs to the RRF family.

It localises to the cytoplasm. Responsible for the release of ribosomes from messenger RNA at the termination of protein biosynthesis. May increase the efficiency of translation by recycling ribosomes from one round of translation to another. This Leptospira interrogans serogroup Icterohaemorrhagiae serovar copenhageni (strain Fiocruz L1-130) protein is Ribosome-recycling factor.